A 328-amino-acid chain; its full sequence is Ribose-phosphate pyrophosphokinase (328 aa).

ATP-binding positions include 39-41 (DGE) and 98-99 (RQ). Residues histidine 132 and aspartate 172 each coordinate Mg(2+). Residue lysine 195 is part of the active site. D-ribose 5-phosphate is bound by residues arginine 197, aspartate 221, and 225–229 (DTGGT).

It belongs to the ribose-phosphate pyrophosphokinase family. Class I subfamily. As to quaternary structure, homohexamer. It depends on Mg(2+) as a cofactor.

The protein resides in the cytoplasm. It carries out the reaction D-ribose 5-phosphate + ATP = 5-phospho-alpha-D-ribose 1-diphosphate + AMP + H(+). It functions in the pathway metabolic intermediate biosynthesis; 5-phospho-alpha-D-ribose 1-diphosphate biosynthesis; 5-phospho-alpha-D-ribose 1-diphosphate from D-ribose 5-phosphate (route I): step 1/1. In terms of biological role, involved in the biosynthesis of the central metabolite phospho-alpha-D-ribosyl-1-pyrophosphate (PRPP) via the transfer of pyrophosphoryl group from ATP to 1-hydroxyl of ribose-5-phosphate (Rib-5-P). The sequence is that of Ribose-phosphate pyrophosphokinase from Mycoplasma pneumoniae (strain ATCC 29342 / M129 / Subtype 1) (Mycoplasmoides pneumoniae).